A 440-amino-acid chain; its full sequence is Glutamyl-tRNA reductase (440 aa).

Residues 50-53 (TCNR), Ser109, 114-116 (EPQ), and Gln120 each bind substrate. Cys51 serves as the catalytic Nucleophile. 189–194 (GAGEMA) provides a ligand contact to NADP(+).

It belongs to the glutamyl-tRNA reductase family. As to quaternary structure, homodimer.

It carries out the reaction (S)-4-amino-5-oxopentanoate + tRNA(Glu) + NADP(+) = L-glutamyl-tRNA(Glu) + NADPH + H(+). It functions in the pathway porphyrin-containing compound metabolism; protoporphyrin-IX biosynthesis; 5-aminolevulinate from L-glutamyl-tRNA(Glu): step 1/2. In terms of biological role, catalyzes the NADPH-dependent reduction of glutamyl-tRNA(Glu) to glutamate 1-semialdehyde (GSA). The chain is Glutamyl-tRNA reductase from Nitratidesulfovibrio vulgaris (strain DP4) (Desulfovibrio vulgaris).